Here is a 518-residue protein sequence, read N- to C-terminus: Allene oxide synthase, chloroplastic (518 aa).

The N-terminal 33 residues, 1-33 (MASISTPFPISLHPKTVRSKPLKFRVLTRPIKA), are a transit peptide targeting the chloroplast. Heme b-binding residues include Lys-133, His-164, and Lys-168. Positions 321 and 389 each coordinate (13S)-hydroperoxy-(9Z,11E)-octadecadienoate. 2 residues coordinate (13S)-hydroperoxy-(9Z,11E,15Z)-octadecatrienoate: Asn-321 and Thr-389. Heme b-binding residues include Lys-469 and Cys-471.

The protein belongs to the cytochrome P450 family. It depends on heme b as a cofactor.

Its subcellular location is the plastid. The protein localises to the chloroplast. The protein resides in the plastoglobule. The catalysed reaction is (13S)-hydroperoxy-(9Z,11E,15Z)-octadecatrienoate = (9Z,13S,15Z)-12,13-epoxyoctadeca-9,11,15-trienoate + H2O. It carries out the reaction (13S)-hydroperoxy-(9Z,11E)-octadecadienoate = (9Z,13S)-12,13-epoxyoctadeca-9,11-dienoate + H2O. The protein operates within lipid metabolism; oxylipin biosynthesis. Functionally, cytochrome P450 enzyme involved in the biosynthesis of oxylipin jasmonates, important phytohormones acting as growth regulators and signaling molecules for plant defense. Functions as an allene oxide synthase that converts hydroperoxy fatty acids to unstable allene epoxides. Catalyzes the dehydration of 13-HPOTE ((13S)-hydroperoxy-(9Z,11E,15Z)-octadecatrienoate), as well as 13-HPODE ((13S)-hydroperoxy-(9Z,11E)-octadecadienoate). The polypeptide is Allene oxide synthase, chloroplastic (CYP74A) (Arabidopsis thaliana (Mouse-ear cress)).